The following is a 119-amino-acid chain: Large ribosomal subunit protein bL20 (119 aa).

The protein belongs to the bacterial ribosomal protein bL20 family.

Its function is as follows. Binds directly to 23S ribosomal RNA and is necessary for the in vitro assembly process of the 50S ribosomal subunit. It is not involved in the protein synthesizing functions of that subunit. The polypeptide is Large ribosomal subunit protein bL20 (Rhodopseudomonas palustris (strain BisB18)).